A 680-amino-acid chain; its full sequence is DNA ligase (680 aa).

32 to 36 (DTVYD) provides a ligand contact to NAD(+). The segment at 47–66 (QNDPGLQRPDSPTQRVGGAP) is disordered. Residues 81-82 (SL) and E115 contribute to the NAD(+) site. K117 serves as the catalytic N6-AMP-lysine intermediate. R138, E175, K291, and K315 together coordinate NAD(+). Zn(2+) contacts are provided by C409, C412, C427, and C432. The BRCT domain maps to 602–680 (DADGVLQGKT…EADLTALLQP (79 aa)).

It belongs to the NAD-dependent DNA ligase family. LigA subfamily. Mg(2+) serves as cofactor. The cofactor is Mn(2+).

It catalyses the reaction NAD(+) + (deoxyribonucleotide)n-3'-hydroxyl + 5'-phospho-(deoxyribonucleotide)m = (deoxyribonucleotide)n+m + AMP + beta-nicotinamide D-nucleotide.. Its function is as follows. DNA ligase that catalyzes the formation of phosphodiester linkages between 5'-phosphoryl and 3'-hydroxyl groups in double-stranded DNA using NAD as a coenzyme and as the energy source for the reaction. It is essential for DNA replication and repair of damaged DNA. The chain is DNA ligase from Synechococcus sp. (strain CC9605).